Reading from the N-terminus, the 149-residue chain is MKLFIILATATLLIAATQAKYLRDEGFDLGETQMSSKCTRQVKMMEPELVKCNRYIAMDIMDDKYEEALSRIQGEGCESEEKFLRGCCVAMKEMEDECVCEWMKMMVENQKGRIGETLMRKGIRDLKELPNKCGISEMECHSRGNWYYV.

The first 22 residues, Met1–Leu22, serve as a signal peptide directing secretion. Disulfide bonds link Cys38-Cys98, Cys52-Cys87, Cys88-Cys133, and Cys100-Cys140. No IgE-binding regions lie at residues Gln41–Asn53, Ala68–Glu81, Leu84–Glu95, and Glu97–Met105. An igE-binding region spans residues Glu108 to Thr117. The tract at residues Lys121–Asn131 is no IgE-binding. An igE-binding region spans residues Lys132–His141.

The protein belongs to the 2S seed storage albumins family. As to expression, expressed in seeds (at protein level). Expressed in seeds.

In terms of biological role, seed storage protein. The protein is 2S seed storage albumin protein of Fagopyrum tataricum (Tartarian buckwheat).